The primary structure comprises 923 residues: Protein dct-6 (923 aa).

Residues D312–Q347 are a coiled coil.

Its function is as follows. May have a role in tumor suppression. The chain is Protein dct-6 (dct-6) from Caenorhabditis elegans.